A 308-amino-acid chain; its full sequence is Adult enhancer factor 1 (308 aa).

2 disordered regions span residues 50–94 (AHMA…PLPF) and 123–143 (QAAA…THLT). Residues 56–76 (QQQQQQQQQQQQQHHQQQQQQ) show a composition bias toward low complexity. Residues 81–90 (PSVPPPPTEL) show a composition bias toward pro residues. 4 C2H2-type zinc fingers span residues 184–206 (FHCT…VKIH), 212–234 (YKCN…LKIH), 240–262 (YNCN…VKIH), and 268–290 (FECV…IKIH).

In terms of tissue distribution, found in all tissues examined including the ovary and the fat body.

Its subcellular location is the nucleus. In terms of biological role, transcriptional repressor that binds specifically to fat body-specific enhancers, namely the adult ADH enhancer (AAE) and the enhancer that controls yolk protein gene expression. The chain is Adult enhancer factor 1 (Aef1) from Drosophila melanogaster (Fruit fly).